A 393-amino-acid polypeptide reads, in one-letter code: Arginine--pyruvate transaminase AruH (393 aa).

Lys-237 bears the N6-(pyridoxal phosphate)lysine mark.

Belongs to the class-I pyridoxal-phosphate-dependent aminotransferase family. In terms of assembly, homodimer. It depends on pyridoxal 5'-phosphate as a cofactor.

The enzyme catalyses L-arginine + pyruvate = 5-guanidino-2-oxopentanoate + L-alanine. It participates in amino-acid degradation; L-arginine degradation. Functionally, catalyzes the conversion of L-arginine into 2-ketoarginine via transamination. L-arginine is the best substrate, but it can also use L-lysine, L-methionine, L-leucine, ornithine and L-glutamine, which indicates that it may have a broader physiological function in amino acid catabolism. This is Arginine--pyruvate transaminase AruH (aruH) from Pseudomonas aeruginosa (strain ATCC 15692 / DSM 22644 / CIP 104116 / JCM 14847 / LMG 12228 / 1C / PRS 101 / PAO1).